A 163-amino-acid polypeptide reads, in one-letter code: Anaerobic nitrite reductase HB1 (163 aa).

One can recognise a Globin domain in the interval 8 to 157; that stretch reads VFTEEQEALV…LVAAIKIEMK (150 aa). The short motif at 41–45 is the Homodimerization element; it reads EIAPS. The heme b site is built by Ser51, Lys65, His69, Lys99, Thr103, and His104. Residues 111-123 carry the Homodimerization motif; sequence DEHFEVTKFALLE.

It belongs to the plant globin family. As to quaternary structure, homodimer. Heme b is required as a cofactor.

It localises to the cytoplasm. The protein localises to the nucleus. The catalysed reaction is Fe(III)-heme b-[protein] + nitric oxide + H2O = Fe(II)-heme b-[protein] + nitrite + 2 H(+). Phytoglobin that reduces nitrite to nitric oxide (NO) under anoxic conditions (e.g. during flooding or in waterlogged soil). May not function as an oxygen storage or transport protein. Has an unusually high affinity for O(2) through an hexacoordinate heme iron because of a very low dissociation constant. The sequence is that of Anaerobic nitrite reductase HB1 from Gossypium hirsutum (Upland cotton).